Here is a 335-residue protein sequence, read N- to C-terminus: Acetyl-coenzyme A carboxylase carboxyl transferase subunit alpha (335 aa).

Positions 40-294 (QLETLATRRR…KASIERHLSE (255 aa)) constitute a CoA carboxyltransferase C-terminal domain.

This sequence belongs to the AccA family. In terms of assembly, acetyl-CoA carboxylase is a heterohexamer composed of biotin carboxyl carrier protein (AccB), biotin carboxylase (AccC) and two subunits each of ACCase subunit alpha (AccA) and ACCase subunit beta (AccD).

The protein localises to the cytoplasm. It carries out the reaction N(6)-carboxybiotinyl-L-lysyl-[protein] + acetyl-CoA = N(6)-biotinyl-L-lysyl-[protein] + malonyl-CoA. The protein operates within lipid metabolism; malonyl-CoA biosynthesis; malonyl-CoA from acetyl-CoA: step 1/1. Its function is as follows. Component of the acetyl coenzyme A carboxylase (ACC) complex. First, biotin carboxylase catalyzes the carboxylation of biotin on its carrier protein (BCCP) and then the CO(2) group is transferred by the carboxyltransferase to acetyl-CoA to form malonyl-CoA. This is Acetyl-coenzyme A carboxylase carboxyl transferase subunit alpha from Prochlorococcus marinus (strain MIT 9515).